A 252-amino-acid chain; its full sequence is Ribosomal RNA small subunit methyltransferase J (252 aa).

Residues Arg-101–Asp-102, Glu-117–Arg-118, Ser-153–Ser-154, and Asp-171 each bind S-adenosyl-L-methionine.

Belongs to the methyltransferase superfamily. RsmJ family.

It is found in the cytoplasm. It carries out the reaction guanosine(1516) in 16S rRNA + S-adenosyl-L-methionine = N(2)-methylguanosine(1516) in 16S rRNA + S-adenosyl-L-homocysteine + H(+). Specifically methylates the guanosine in position 1516 of 16S rRNA. The chain is Ribosomal RNA small subunit methyltransferase J from Salmonella dublin (strain CT_02021853).